Here is a 651-residue protein sequence, read N- to C-terminus: Probable replication restart protein PriA (651 aa).

Residues Cys-371, Cys-374, Cys-380, Cys-383, Cys-399, Cys-402, Cys-411, and Cys-414 each contribute to the Zn(2+) site.

The protein belongs to the helicase family. PriA subfamily. In terms of assembly, component of the replication restart primosome. Zn(2+) serves as cofactor.

Its function is as follows. Initiates the restart of stalled replication forks, which reloads the replicative helicase on sites other than the origin of replication. Recognizes and binds to abandoned replication forks and remodels them to uncover a helicase loading site. Promotes assembly of the primosome at these replication forks. The polypeptide is Probable replication restart protein PriA (Mycobacterium leprae (strain TN)).